The primary structure comprises 284 residues: Shikimate dehydrogenase (NADP(+)) (284 aa).

Shikimate contacts are provided by residues 20–22 (SIS) and serine 67. The active-site Proton acceptor is lysine 71. Aspartate 83 provides a ligand contact to NADP(+). Shikimate contacts are provided by asparagine 92 and aspartate 107. Residues 129–133 (GAGGA) and isoleucine 227 contribute to the NADP(+) site. Tyrosine 229 contacts shikimate. NADP(+) is bound at residue glycine 250.

Belongs to the shikimate dehydrogenase family. As to quaternary structure, homodimer.

It carries out the reaction shikimate + NADP(+) = 3-dehydroshikimate + NADPH + H(+). It participates in metabolic intermediate biosynthesis; chorismate biosynthesis; chorismate from D-erythrose 4-phosphate and phosphoenolpyruvate: step 4/7. In terms of biological role, involved in the biosynthesis of the chorismate, which leads to the biosynthesis of aromatic amino acids. Catalyzes the reversible NADPH linked reduction of 3-dehydroshikimate (DHSA) to yield shikimate (SA). This is Shikimate dehydrogenase (NADP(+)) from Streptococcus pneumoniae (strain P1031).